The following is a 5875-amino-acid chain: Probable E3 ubiquitin-protein ligase DDB_G0283893 (5875 aa).

Disordered regions lie at residues 17–64 (DNNN…QPPE), 164–185 (NNNN…QSNN), 232–276 (DSNN…TTTS), 302–342 (PSFK…CGNG), 642–693 (TTTT…SPPI), 716–740 (SIRS…TTNA), 1081–1101 (ITPT…TSIP), 1291–1367 (DGWE…KEST), 1806–1851 (QESE…SSPP), 1952–1982 (KKPS…KDEV), 2008–2036 (EDED…DDEE), 2109–2203 (KALK…TGSG), 2893–2930 (DSDD…TNDS), 3083–3119 (TSPS…SGSN), and 3195–3214 (LLPP…DNTN). Positions 18–52 (NNNNNNNNNNNNNNNNNNNNNNNNNNNSNNNNNKN) are enriched in low complexity. Over residues 237–249 (DNKENKKEDKESS) the composition is skewed to basic and acidic residues. 3 stretches are compositionally biased toward low complexity: residues 250-276 (KPIA…TTTS), 317-333 (TSTI…ITQP), and 642-656 (TTTT…TTTT). Polar residues predominate over residues 657 to 669 (NESIPMETTRSST). Residues 670-693 (PIPIVNNNNNNNDSKSNSKKSPPI) show a composition bias toward low complexity. Positions 716 to 725 (SIRSSSNKVN) are enriched in polar residues. Low complexity predominate over residues 728-740 (TPKSSTTTTTTNA). Residues 1297-1330 (FNDDDDEEEDEEEEEEMDEDDSENDEDEDSEESE) are compositionally biased toward acidic residues. Residues 1300–1328 (DDDEEEDEEEEEEMDEDDSENDEDEDSEE) are a coiled coil. Low complexity-rich tracts occupy residues 1347-1363 (TTTT…TATT) and 1838-1851 (SNSS…SSPP). Positions 1963–1977 (GGCHHSNHHHHHHHS) are enriched in basic residues. A UBR-type zinc finger spans residues 2042–2113 (KVCTYTFTKN…KGNPCKALKP (72 aa)). 2 stretches are compositionally biased toward low complexity: residues 2118 to 2168 (PPKQ…TNTN) and 2178 to 2203 (SSSS…TGSG). A compositionally biased stretch (acidic residues) spans 2893-2903 (DSDDSDDEFPT). Residues 2908–2917 (VTSSGLSTSA) show a composition bias toward low complexity. Low complexity predominate over residues 3201 to 3211 (SSSNENVVDND). A ZZ-type zinc finger spans residues 3226–3280 (EVLFSCDLCNINPITGKRWNCSNCGDFDLCNQCYQNPEKDHPKDHIFKEFIIDEP). 8 residues coordinate Zn(2+): cysteine 3231, cysteine 3234, cysteine 3246, cysteine 3249, cysteine 3255, cysteine 3258, histidine 3266, and histidine 3270. Disordered stretches follow at residues 3282–3312 (KDGD…QDDS), 3326–3359 (LNNN…PTTN), and 3754–3776 (SSTS…SNDI). Low complexity-rich tracts occupy residues 3295–3307 (QQQK…LQQD) and 3327–3358 (NNNN…TPTT). The 20-residue stretch at 3313 to 3332 (EYDEELKIAISMSLNNNNNN) folds into the UIM domain. Polar residues predominate over residues 3754-3763 (SSTSQDTQQE). Residues 3764–3774 (SSNNNNNNNSN) are compositionally biased toward low complexity. Residues 4118–4146 (IENQEDHKRAIQTIEKESENAHKKYQRLI) are a coiled coil. Residues 4182–4222 (NTSTNSTGSNNQSINSSSGNISTNSSSSSSSSFGISNQSSS) show a composition bias toward low complexity. 3 disordered regions span residues 4182 to 4237 (NTST…GGVI), 4295 to 4323 (FISG…RQCP), and 4616 to 4671 (KILS…FDND). Residues 4223–4236 (GNGGGGVGSGGGGV) are compositionally biased toward gly residues. Low complexity predominate over residues 4308-4317 (QQQQQQQQQQ). Positions 4585–4618 (QIQQQIALQQQQIQQQIQQQQQQLNESVSGLKIL) form a coiled coil. 2 stretches are compositionally biased toward low complexity: residues 4619-4635 (SPSS…ATGS) and 4645-4659 (SSGS…ISSS). Positions 5357 to 5870 (PALPFVLVLL…EYLLKLYKSV (514 aa)) are UBR4 E3 catalytic module. Residues 5476 to 5620 (GFTCMVCREG…WVNLNNISRV (145 aa)) form a HemiRING-type zinc finger. Cysteine 5479, cysteine 5482, histidine 5554, and cysteine 5557 together coordinate Zn(2+). A UZI domain is found at 5623 to 5870 (PKFRILSHDL…EYLLKLYKSV (248 aa)). Positions 5819 to 5846 (QVDVKELLNCFENELKEFQDEMEFFDDE) form a coiled coil.

This sequence belongs to the UBR4 family.

It functions in the pathway protein modification; protein ubiquitination. Probable E3 ubiquitin-protein ligase. The sequence is that of Probable E3 ubiquitin-protein ligase DDB_G0283893 from Dictyostelium discoideum (Social amoeba).